The primary structure comprises 434 residues: Glutamate-1-semialdehyde 2,1-aminomutase 1 (434 aa).

Residue Lys-270 is modified to N6-(pyridoxal phosphate)lysine.

This sequence belongs to the class-III pyridoxal-phosphate-dependent aminotransferase family. HemL subfamily. Homodimer. The cofactor is pyridoxal 5'-phosphate.

It is found in the cytoplasm. It catalyses the reaction (S)-4-amino-5-oxopentanoate = 5-aminolevulinate. The protein operates within porphyrin-containing compound metabolism; protoporphyrin-IX biosynthesis; 5-aminolevulinate from L-glutamyl-tRNA(Glu): step 2/2. The chain is Glutamate-1-semialdehyde 2,1-aminomutase 1 from Bacillus thuringiensis subsp. konkukian (strain 97-27).